The following is a 118-amino-acid chain: Basic phospholipase A2 PA-9C (118 aa).

Intrachain disulfides connect cysteine 11-cysteine 71, cysteine 27-cysteine 117, cysteine 29-cysteine 45, cysteine 44-cysteine 98, cysteine 51-cysteine 91, cysteine 60-cysteine 84, and cysteine 78-cysteine 89. Ca(2+)-binding residues include tyrosine 28, glycine 30, and glycine 32. The active site involves histidine 48. Position 49 (aspartate 49) interacts with Ca(2+). Aspartate 92 is an active-site residue.

This sequence belongs to the phospholipase A2 family. Group I subfamily. D49 sub-subfamily. Ca(2+) serves as cofactor. Expressed by the venom gland.

It localises to the secreted. The enzyme catalyses a 1,2-diacyl-sn-glycero-3-phosphocholine + H2O = a 1-acyl-sn-glycero-3-phosphocholine + a fatty acid + H(+). Functionally, PLA2 catalyzes the calcium-dependent hydrolysis of the 2-acyl groups in 3-sn-phosphoglycerides. The sequence is that of Basic phospholipase A2 PA-9C from Pseudechis australis (Mulga snake).